Consider the following 79-residue polypeptide: Small ribosomal subunit protein eS17 (79 aa).

It belongs to the eukaryotic ribosomal protein eS17 family.

The chain is Small ribosomal subunit protein eS17 from Saccharolobus islandicus (strain Y.N.15.51 / Yellowstone #2) (Sulfolobus islandicus).